The following is a 443-amino-acid chain: Spermidine hydroxycinnamoyltransferase 1 (443 aa).

Catalysis depends on proton acceptor residues His-167 and Asp-390.

The protein belongs to the plant acyltransferase family.

Its function is as follows. Hydroxycinnamoyl transferase that catalyzes the transfer of an acyl from p-coumaryol-CoA to spermidine, to produce coumaroyl spermidine. Can use feruloyl-CoA as acyl donor. Contributes to the natural variation of spermidine-based phenolamides in rice cultivars. The sequence is that of Spermidine hydroxycinnamoyltransferase 1 from Oryza sativa subsp. japonica (Rice).